The sequence spans 246 residues: Probable transcriptional regulatory protein CGSHiEE_01480 (246 aa).

The protein belongs to the TACO1 family.

The protein localises to the cytoplasm. This chain is Probable transcriptional regulatory protein CGSHiEE_01480, found in Haemophilus influenzae (strain PittEE).